The primary structure comprises 1042 residues: Isoleucine--tRNA ligase (1042 aa).

Positions 48–58 match the 'HIGH' region motif; that stretch reads PFATGLPHFGH. The 'KMSKS' region signature appears at 594–598; the sequence is KMSKS. Lysine 597 provides a ligand contact to ATP.

It belongs to the class-I aminoacyl-tRNA synthetase family. IleS type 2 subfamily. In terms of assembly, monomer. Zn(2+) serves as cofactor.

The protein localises to the cytoplasm. The enzyme catalyses tRNA(Ile) + L-isoleucine + ATP = L-isoleucyl-tRNA(Ile) + AMP + diphosphate. Catalyzes the attachment of isoleucine to tRNA(Ile). As IleRS can inadvertently accommodate and process structurally similar amino acids such as valine, to avoid such errors it has two additional distinct tRNA(Ile)-dependent editing activities. One activity is designated as 'pretransfer' editing and involves the hydrolysis of activated Val-AMP. The other activity is designated 'posttransfer' editing and involves deacylation of mischarged Val-tRNA(Ile). This Borrelia garinii subsp. bavariensis (strain ATCC BAA-2496 / DSM 23469 / PBi) (Borreliella bavariensis) protein is Isoleucine--tRNA ligase.